Reading from the N-terminus, the 930-residue chain is Polypeptide N-acetylgalactosaminyltransferase 5 (930 aa).

The Cytoplasmic segment spans residues 1-12 (MNKIRKFFRGSG). Residues 13-35 (RVLAFIFVASVIWLLFDMAALRL) form a helical; Signal-anchor for type II membrane protein membrane-spanning segment. The Lumenal segment spans residues 36–930 (SFSEINTGIL…KWKFEKYYDV (895 aa)). Residues 163–210 (GSEKDSFTVSRGVPLNKTAEHTETLDKKQEAPENYNLSSDTSKQASQR) form a disordered region. Residue Asn-178 is glycosylated (N-linked (GlcNAc...) asparagine). The span at 180–193 (TAEHTETLDKKQEA) shows a compositional bias: basic and acidic residues. The segment covering 197–210 (YNLSSDTSKQASQR) has biased composition (polar residues). N-linked (GlcNAc...) asparagine glycosylation is found at Asn-198 and Asn-213. Ser-285 is subject to Phosphoserine. N-linked (GlcNAc...) asparagine glycosylation is found at Asn-287 and Asn-309. Residues 344–377 (LGESQGKHIPRSQSQTLSSPLAPKRAVSQSKPTL) form a disordered region. Residues Asn-387 and Asn-403 are each glycosylated (N-linked (GlcNAc...) asparagine). Intrachain disulfides connect Cys-476/Cys-708, Cys-699/Cys-779, and Cys-812/Cys-825. Residues 485–594 (LPTTSIIMCF…VGWLEPLLER (110 aa)) form a catalytic subdomain A region. Residues Asp-526 and Arg-555 each contribute to the substrate site. N-linked (GlcNAc...) asparagine glycosylation is present at Asn-568. Asp-578 is a Mn(2+) binding site. A substrate-binding site is contributed by Ser-579. Position 580 (His-580) interacts with Mn(2+). The segment at 654–716 (IIRCPVMAGG…PCSRVGHIFR (63 aa)) is catalytic subdomain B. Trp-685 is a binding site for substrate. His-713 contacts Mn(2+). Substrate contacts are provided by Arg-716 and Tyr-721. Asn-766, Asn-817, and Asn-835 each carry an N-linked (GlcNAc...) asparagine glycan. Residues 794 to 925 (KAPVVRASGV…TEPQQKWKFE (132 aa)) enclose the Ricin B-type lectin domain. Intrachain disulfides connect Cys-848/Cys-863 and Cys-898/Cys-913. Asn-902 is a glycosylation site (N-linked (GlcNAc...) asparagine).

This sequence belongs to the glycosyltransferase 2 family. GalNAc-T subfamily. Interacts with EXT2. Does not interact with EXT1, EXTL1 or EXTL3. Mn(2+) is required as a cofactor. In terms of tissue distribution, predominantly expressed in sublingual gland. Expressed at lower level in stomach and small intestine. Weakly or not expressed in submandibular gland, parotid gland, kidney, liver, heart, brain, spleen, lung, skeletal muscle, testis, ovary, cervix and uterus.

The protein resides in the golgi apparatus membrane. It carries out the reaction L-seryl-[protein] + UDP-N-acetyl-alpha-D-galactosamine = a 3-O-[N-acetyl-alpha-D-galactosaminyl]-L-seryl-[protein] + UDP + H(+). It catalyses the reaction L-threonyl-[protein] + UDP-N-acetyl-alpha-D-galactosamine = a 3-O-[N-acetyl-alpha-D-galactosaminyl]-L-threonyl-[protein] + UDP + H(+). The protein operates within protein modification; protein glycosylation. In terms of biological role, catalyzes the initial reaction in O-linked oligosaccharide biosynthesis, the transfer of an N-acetyl-D-galactosamine residue to a serine or threonine residue on the protein receptor. Has activity toward EA2 peptide substrate, but has a weak activity toward Muc2, Muc1b, rMuc-2 or mG-Muc substrates. The sequence is that of Polypeptide N-acetylgalactosaminyltransferase 5 (Galnt5) from Rattus norvegicus (Rat).